The primary structure comprises 108 residues: Integration host factor subunit alpha (108 aa).

This sequence belongs to the bacterial histone-like protein family. Heterodimer of an alpha and a beta chain.

Its function is as follows. This protein is one of the two subunits of integration host factor, a specific DNA-binding protein that functions in genetic recombination as well as in transcriptional and translational control. This chain is Integration host factor subunit alpha, found in Methylorubrum extorquens (strain CM4 / NCIMB 13688) (Methylobacterium extorquens).